We begin with the raw amino-acid sequence, 117 residues long: Large ribosomal subunit protein bL17 (117 aa).

This sequence belongs to the bacterial ribosomal protein bL17 family. As to quaternary structure, part of the 50S ribosomal subunit. Contacts protein L32.

The protein is Large ribosomal subunit protein bL17 of Exiguobacterium sp. (strain ATCC BAA-1283 / AT1b).